The following is a 739-amino-acid chain: Alcohol dehydrogenase (quinone), dehydrogenase subunit (739 aa).

The signal sequence occupies residues 1–35 (MISAVFGKRRSLSRTLTAGTICAALISGYATMASA). Glutamate 97 contacts pyrroloquinoline quinone. Cysteine 143 and cysteine 144 are oxidised to a cystine. Arginine 149 provides a ligand contact to pyrroloquinoline quinone. Glutamate 217 is a Ca(2+) binding site. Threonine 279 contacts pyrroloquinoline quinone. The Ca(2+) site is built by asparagine 299 and aspartate 344. Aspartate 344 (proton acceptor) is an active-site residue. Pyrroloquinoline quinone contacts are provided by lysine 371 and isoleucine 585. A Cytochrome c domain is found at 635–739 (FDSKRTDNGY…NADGIPEQLP (105 aa)). Heme c-binding residues include cysteine 651, cysteine 654, histidine 655, and methionine 694.

Belongs to the bacterial PQQ dehydrogenase family. In terms of assembly, the alcohol dehydrogenase multicomponent enzyme system is composed of a dehydrogenase subunit I (AdhA) and a cytochrome c subunit II (AdhB). Pyrroloquinoline quinone is required as a cofactor. It depends on Ca(2+) as a cofactor. Heme c serves as cofactor.

It localises to the cell membrane. It catalyses the reaction ethanol + a ubiquinone = a ubiquinol + acetaldehyde. Its function is as follows. Dehydrogenase component of the alcohol dehydrogenase multicomponent enzyme system which is involved in the production of acetic acid and in the ethanol oxidase respiratory chain. Quinohemoprotein alcohol dehydrogenase (ADH) catalyzes the oxidation of ethanol to acetaldehyde by transferring electrons to the ubiquinone embedded in the membrane phospholipids. The electrons transfer from ethanol to membranous ubiquinone occurs from pyrroloquinoline quinone (PQQ) to one heme c in subunit I (AdhA), and finally to two heme c in subunit II (AdhB). Besides ubiquinone reduction, ADH also has a ubiquinol (QH2) oxidation reaction which mediates electron transfer from ubiquinol to the non-energy generating bypass oxidase system. The electrons transfer occurs from ubiquinol (QH2) to the additional heme c within subunit II (AdhB). This Komagataeibacter europaeus (Gluconacetobacter europaeus) protein is Alcohol dehydrogenase (quinone), dehydrogenase subunit.